A 1091-amino-acid chain; its full sequence is Protein JSN1 (1091 aa).

Disordered stretches follow at residues 31-51 (EYEN…KLGS) and 75-131 (HHSK…GSLT). The segment covering 99-111 (TVASKTPRASPSR) has biased composition (polar residues). S129 bears the Phosphoserine mark. Residue T131 is modified to Phosphothreonine. A phosphoserine mark is found at S160 and S168. The region spanning 340–426 (NTISISNVFP…APSKISFAKI (87 aa)) is the RRM domain. Composition is skewed to low complexity over residues 482-494 (QQSQ…NHSS) and 507-520 (NNNN…NNSA). 2 disordered regions span residues 482–534 (QQSQ…PPPN) and 568–591 (HKGT…EFDP). The PUM-HD domain maps to 557 to 913 (QINSLIKKSL…RLLEEVGLAS (357 aa)). The segment covering 568–577 (HKGTSDTQNF) has biased composition (polar residues). 5 Pumilio repeats span residues 617–652 (AMLD…IMLR), 653–689 (KTSK…QVTQ), 690–724 (GVKD…FIFE), 725–760 (SIIA…QSIV), and 801–837 (RLTK…IILD). The tract at residues 911-981 (LASPSSTHNK…GSSASTLSPG (71 aa)) is disordered. The residue at position 913 (S913) is a Phosphoserine. Composition is skewed to low complexity over residues 915 to 935 (SSTH…SISH) and 951 to 979 (SVSS…STLS).

In Saccharomyces cerevisiae (strain ATCC 204508 / S288c) (Baker's yeast), this protein is Protein JSN1 (JSN1).